Here is a 363-residue protein sequence, read N- to C-terminus: Cobalt-precorrin-5B C(1)-methyltransferase (363 aa).

This sequence belongs to the CbiD family.

It catalyses the reaction Co-precorrin-5B + S-adenosyl-L-methionine = Co-precorrin-6A + S-adenosyl-L-homocysteine. It participates in cofactor biosynthesis; adenosylcobalamin biosynthesis; cob(II)yrinate a,c-diamide from sirohydrochlorin (anaerobic route): step 6/10. Catalyzes the methylation of C-1 in cobalt-precorrin-5B to form cobalt-precorrin-6A. The polypeptide is Cobalt-precorrin-5B C(1)-methyltransferase (Burkholderia mallei (strain ATCC 23344)).